The following is a 441-amino-acid chain: 3-phosphoshikimate 1-carboxyvinyltransferase (441 aa).

Positions 22, 23, and 27 each coordinate 3-phosphoshikimate. Position 22 (K22) interacts with phosphoenolpyruvate. Phosphoenolpyruvate is bound by residues G95 and R123. The 3-phosphoshikimate site is built by S168, Q170, D321, and K348. Q170 is a binding site for phosphoenolpyruvate. D321 acts as the Proton acceptor in catalysis. 2 residues coordinate phosphoenolpyruvate: R352 and R400.

Belongs to the EPSP synthase family. In terms of assembly, monomer.

Its subcellular location is the cytoplasm. The catalysed reaction is 3-phosphoshikimate + phosphoenolpyruvate = 5-O-(1-carboxyvinyl)-3-phosphoshikimate + phosphate. The protein operates within metabolic intermediate biosynthesis; chorismate biosynthesis; chorismate from D-erythrose 4-phosphate and phosphoenolpyruvate: step 6/7. In terms of biological role, catalyzes the transfer of the enolpyruvyl moiety of phosphoenolpyruvate (PEP) to the 5-hydroxyl of shikimate-3-phosphate (S3P) to produce enolpyruvyl shikimate-3-phosphate and inorganic phosphate. This is 3-phosphoshikimate 1-carboxyvinyltransferase from Novosphingobium aromaticivorans (strain ATCC 700278 / DSM 12444 / CCUG 56034 / CIP 105152 / NBRC 16084 / F199).